The chain runs to 522 residues: Lysine--tRNA ligase (522 aa).

A 'HIGH' region motif is present at residues 44–52 (PSGLPHIGT). The short motif at 290 to 294 (KISKS) is the 'KMSKS' region element. Lysine 293 serves as a coordination point for ATP.

This sequence belongs to the class-I aminoacyl-tRNA synthetase family.

Its subcellular location is the cytoplasm. It carries out the reaction tRNA(Lys) + L-lysine + ATP = L-lysyl-tRNA(Lys) + AMP + diphosphate. The sequence is that of Lysine--tRNA ligase from Rickettsia peacockii (strain Rustic).